The following is a 319-amino-acid chain: Olfactory receptor 56B4 (319 aa).

Residues 1–31 are Extracellular-facing; the sequence is MDTSTSVTYDSSLQISQFILMGLPGIHEWQH. The helical transmembrane segment at 32–52 threads the bilayer; it reads WLSLPLTLLYLLALGANLLII. Over 53–60 the chain is Cytoplasmic; sequence ITIQHETV. Residues 61–81 traverse the membrane as a helical segment; the sequence is LHEPMYHLLGILAVVDIGLAT. Over 82–105 the chain is Extracellular; the sequence is TIMPKILAIFWFDAKAISLPMCFA. Residues Cys-103 and Cys-195 are joined by a disulfide bond. The helical transmembrane segment at 106 to 126 threads the bilayer; that stretch reads QIYAIHCFFCIESGIFLCMAV. Residues 127 to 145 lie on the Cytoplasmic side of the membrane; sequence DRYIAICRPLQYPSIVTKA. The chain crosses the membrane as a helical span at residues 146–166; the sequence is FVFKATGFIMLRNGLLTIPVP. The Extracellular portion of the chain corresponds to 167–202; sequence ILAAQRHYCSRNEIEHCLCSNLGVISLACDDITVNK. Residues 203–223 traverse the membrane as a helical segment; it reads FYQLMLAWVLVGSDMALVFSS. At 224–243 the chain is on the cytoplasmic side; the sequence is YAVILHSVLRLNSAEAMSKA. Residues 244-263 traverse the membrane as a helical segment; sequence LSTCSSHLILILFHTGIIVL. At 264 to 277 the chain is on the extracellular side; sequence SVTHLAEKKIPLIP. The helical transmembrane segment at 278–298 threads the bilayer; sequence VFLNVLHNVIPPALNPLACAL. The Cytoplasmic portion of the chain corresponds to 299 to 319; it reads RMHKLRLGFQRLLGLGQDVSK.

Belongs to the G-protein coupled receptor 1 family.

Its subcellular location is the cell membrane. Its function is as follows. Odorant receptor. The polypeptide is Olfactory receptor 56B4 (OR56B4) (Homo sapiens (Human)).